Reading from the N-terminus, the 743-residue chain is MGPSAHLISALGVIIMATMVAAYEPETYASPPPLYSSPLPEVEYKTPPLPYVDSSPPPTYTPAPEVEYKSPPPPYVYSSPPPPTYSPSPKVDYKSPPPPYVYSSPPPPYYSPSPKVDYKSPPPPYVYNSPPPPYYSPSPKVDYKSPPPPYVYSSPPPPYYSPSPKVEYKSPPPPYVYSSPPPPYYSPSPKVDYKSPPPPYVYSSPPPPYYSPSPKVEYKSPPPPYVYSSPPPPYYSPSPKVDYKSPPPPYVYSSPPPPYYSPSPKVDYKSPPPPYVYSSPPPPYYSPSPKVDYKSPPPPYVYSSPPPPYYSPSPKVDYKSPPPPYVYSSPPPPYYSPSPKVDYKSPPPPYVYSSPPPPTYSPSPKVDYKSPPPPYVYSSPPPPYYSPSPKVEYKSPPPPYVYSSPPPPTYSPSPKVYYKSPPPPYVYSSPPPPYYSPSPKVYYKSPPPPYVYSSPPPPYYSPSPKVYYKSPPPPYVYSSPPPPYYSPSPKVYYKSPPPPYVYSSPPPPYYSPSPKVYYKSPPPPYVYSSPPPPYYSPSPKVHYKSPPPPYVYSSPPPPYYSPSPKVHYKSPPPPYVYNSPPPPYYSPSPKVYYKSPPPPYVYSSPPPPYYSPSPKVYYKSPPPPYVYSSPPPPYYSPSPKVYYKSPPPPYYSPSPKVYYKSPPHPHVCVCPPPPPCYSPSPKVVYKSPPPPYVYNSPPPPYYSPSPKVYYKSPPPPSYYSPSPKVEYKSPPPPSYSPSPKTEY.

A signal peptide spans 1–22 (MGPSAHLISALGVIIMATMVAA). The tract at residues 46-93 (TPPLPYVDSSPPPTYTPAPEVEYKSPPPPYVYSSPPPPTYSPSPKVDY) is disordered. Composition is skewed to pro residues over residues 47-61 (PPLP…PTYT) and 70-86 (SPPP…PTYS). 47 repeat units span residues 70–78 (SPPPPYVYS), 79–94 (SPPP…VDYK), 95–103 (SPPPPYVYS), 104–119 (SPPP…VDYK), 120–128 (SPPPPYVYN), 129–144 (SPPP…VDYK), 145–153 (SPPPPYVYS), 154–169 (SPPP…VEYK), 170–178 (SPPPPYVYS), 179–194 (SPPP…VDYK), 195–203 (SPPPPYVYS), 204–219 (SPPP…VEYK), 220–228 (SPPPPYVYS), 229–244 (SPPP…VDYK), 245–253 (SPPPPYVYS), 254–269 (SPPP…VDYK), 270–278 (SPPPPYVYS), 279–294 (SPPP…VDYK), 295–303 (SPPPPYVYS), 304–319 (SPPP…VDYK), 320–328 (SPPPPYVYS), 329–344 (SPPP…VDYK), 345–353 (SPPPPYVYS), 354–369 (SPPP…VDYK), 370–378 (SPPPPYVYS), 379–394 (SPPP…VEYK), 395–403 (SPPPPYVYS), 404–419 (SPPP…VYYK), 420–428 (SPPPPYVYS), 429–444 (SPPP…VYYK), 445–453 (SPPPPYVYS), 454–469 (SPPP…VYYK), 470–478 (SPPPPYVYS), 479–494 (SPPP…VYYK), 495–503 (SPPPPYVYS), 504–519 (SPPP…VYYK), 520–528 (SPPPPYVYS), 529–544 (SPPP…VHYK), 545–553 (SPPPPYVYS), 554–569 (SPPP…VHYK), 570–578 (SPPPPYVYN), 579–594 (SPPP…VYYK), 595–603 (SPPPPYVYS), 604–619 (SPPP…VYYK), 620–628 (SPPPPYVYS), 629–644 (SPPP…VYYK), and 645–660 (SPPP…VYYK). The 23 X 9 AA repeats of S-P-P-P-P-Y-V-Y-[SN] stretch occupies residues 70–628 (SPPPPYVYSS…KSPPPPYVYS (559 aa)). The tract at residues 79–660 (SPPPPTYSPS…YSPSPKVYYK (582 aa)) is 24 X 16 AA repeats of S-P-P-P-P-[YT]-Y-S-P-S-P-K-V-[DEYH]-Y-K. Residues 715 to 743 (PPSYYSPSPKVEYKSPPPPSYSPSPKTEY) form a disordered region.

Belongs to the extensin family. Extensins contain a characteristic repeat of the pentapeptide Ser-Pro(4). The proline residues are hydroxylated and then O-glycosylated (arabinosylation). In terms of processing, synthetised as soluble proteins which become insolubilised in the cell wall through the intermolecular cross-linking of Tyr on adjacent monomers. Isodityrosine (IDT) stabilizes and makes rigid the part of the polypeptide where IDT functional sites are present. In terms of tissue distribution, predominantly expressed in the roots.

It is found in the secreted. The protein resides in the primary cell wall. Its function is as follows. Structural component which strengthens the primary cell wall. This is Extensin-2 from Arabidopsis thaliana (Mouse-ear cress).